We begin with the raw amino-acid sequence, 812 residues long: Fibroblast growth factor receptor 1 (812 aa).

An N-terminal signal peptide occupies residues Met-1–Val-20. Residues Ala-21–Leu-371 are Extracellular-facing. An Ig-like C2-type 1 domain is found at Ser-25–Ser-118. Cys-54 and Cys-100 form a disulfide bridge. N-linked (GlcNAc...) asparagine glycosylation is found at Asn-76, Asn-116, Asn-133, Asn-223, Asn-236, Asn-260, Asn-292, Asn-313, and Asn-326. Residues Leu-121 to His-153 are disordered. Acidic residues predominate over residues Ala-124–Ser-135. Ig-like C2-type domains lie at Pro-154–Asp-242 and Pro-251–Thr-353. The cysteines at positions 174 and 226 are disulfide-linked. A disulfide bond links Cys-273 and Cys-337. A helical membrane pass occupies residues Glu-372 to Phe-393. The Cytoplasmic portion of the chain corresponds to Lys-394–Arg-812. Tyr-457 carries the post-translational modification Phosphotyrosine; by autocatalysis. The 290-residue stretch at Leu-472 to Leu-761 folds into the Protein kinase domain. ATP-binding positions include Leu-478–Gly-484, Lys-508, Glu-556–Thr-558, and Asn-562. A phosphotyrosine; by autocatalysis mark is found at Tyr-577 and Tyr-579. The active-site Proton acceptor is Asp-617. ATP contacts are provided by Arg-621 and Asp-635. Phosphotyrosine; by autocatalysis is present on residues Tyr-647, Tyr-648, Tyr-724, and Tyr-760. The segment at Ser-784–Arg-812 is disordered.

Belongs to the protein kinase superfamily. Tyr protein kinase family. Fibroblast growth factor receptor subfamily. Monomer. Homodimer after ligand binding. Interacts with il17rd. In terms of processing, autophosphorylated. Binding of FGF family members together with heparan sulfate proteoglycan or heparin promotes receptor dimerization and autophosphorylation on tyrosine residues. Autophosphorylation occurs in trans between the two FGFR molecules present in the dimer and proceeds in a highly ordered manner. Phosphotyrosine residues provide docking sites for interacting proteins and so are crucial for FGFR1 function and its regulation. Ubiquitinated. FGFR1 is rapidly ubiquitinated after autophosphorylation, leading to internalization and degradation. Post-translationally, N-glycosylated in the endoplasmic reticulum. The N-glycan chains undergo further maturation to an Endo H-resistant form in the Golgi apparatus.

It is found in the cell membrane. It localises to the nucleus. The protein localises to the cytoplasm. The protein resides in the cytosol. Its subcellular location is the cytoplasmic vesicle. It catalyses the reaction L-tyrosyl-[protein] + ATP = O-phospho-L-tyrosyl-[protein] + ADP + H(+). Its activity is regulated as follows. Present in an inactive conformation in the absence of bound ligand. Ligand binding leads to dimerization and activation by sequential autophosphorylation on tyrosine residues. In terms of biological role, tyrosine-protein kinase that acts as a cell-surface receptor for fibroblast growth factors and plays an essential role in the regulation of embryonic development, cell proliferation, differentiation and migration. Required for normal mesoderm patterning and normal skeletogenesis. Phosphorylates PLCG1, FRS2, GAB1 and SHB. Ligand binding leads to the activation of several signaling cascades. Activation of PLCG1 leads to the production of the cellular signaling molecules diacylglycerol and inositol-1,4,5-trisphosphate. Phosphorylation of FRS2 triggers recruitment of GRB2, GAB1, PIK3R1 and SOS1, and mediates activation of RAS, MAPK1/ERK2, MAPK3/ERK1 and the MAP kinase signaling pathway, as well as of the AKT1 signaling pathway. Promotes phosphorylation of SHC1, STAT1 and PTPN11/SHP2. In the nucleus, enhances RPS6KA1 and CREB1 activity and contributes to the regulation of transcription. FGFR1 signaling is down-regulated by ubiquitination, internalization and degradation. The sequence is that of Fibroblast growth factor receptor 1 (fgfr1) from Xenopus laevis (African clawed frog).